Here is a 158-residue protein sequence, read N- to C-terminus: 2-C-methyl-D-erythritol 2,4-cyclodiphosphate synthase (158 aa).

Residues aspartate 8 and histidine 10 each coordinate a divalent metal cation. Residues 8 to 10 (DVH) and 34 to 35 (HS) each bind 4-CDP-2-C-methyl-D-erythritol 2-phosphate. Histidine 42 is an a divalent metal cation binding site. 4-CDP-2-C-methyl-D-erythritol 2-phosphate-binding positions include 56–58 (DIG), 61–65 (FPDTD), 100–106 (AQKPKML), 132–135 (TTEE), phenylalanine 139, and lysine 142.

Belongs to the IspF family. Homotrimer. A divalent metal cation is required as a cofactor.

It catalyses the reaction 4-CDP-2-C-methyl-D-erythritol 2-phosphate = 2-C-methyl-D-erythritol 2,4-cyclic diphosphate + CMP. It functions in the pathway isoprenoid biosynthesis; isopentenyl diphosphate biosynthesis via DXP pathway; isopentenyl diphosphate from 1-deoxy-D-xylulose 5-phosphate: step 4/6. Functionally, involved in the biosynthesis of isopentenyl diphosphate (IPP) and dimethylallyl diphosphate (DMAPP), two major building blocks of isoprenoid compounds. Catalyzes the conversion of 4-diphosphocytidyl-2-C-methyl-D-erythritol 2-phosphate (CDP-ME2P) to 2-C-methyl-D-erythritol 2,4-cyclodiphosphate (ME-CPP) with a corresponding release of cytidine 5-monophosphate (CMP). This is 2-C-methyl-D-erythritol 2,4-cyclodiphosphate synthase from Clostridium tetani (strain Massachusetts / E88).